Reading from the N-terminus, the 162-residue chain is Peptidyl-prolyl cis-trans isomerase-like 1 (162 aa).

The region spanning 1 to 155 (MTTNIVLETT…EEVKIVKARV (155 aa)) is the PPIase cyclophilin-type domain.

The protein belongs to the cyclophilin-type PPIase family. PPIL1 subfamily.

The enzyme catalyses [protein]-peptidylproline (omega=180) = [protein]-peptidylproline (omega=0). Its function is as follows. PPIases accelerate the folding of proteins. It catalyzes the cis-trans isomerization of proline imidic peptide bonds in oligopeptides. The protein is Peptidyl-prolyl cis-trans isomerase-like 1 (CYP1) of Gibberella zeae (strain ATCC MYA-4620 / CBS 123657 / FGSC 9075 / NRRL 31084 / PH-1) (Wheat head blight fungus).